Consider the following 311-residue polypeptide: Pyrimidine-specific ribonucleoside hydrolase RihA (311 aa).

His240 is a catalytic residue.

This sequence belongs to the IUNH family. RihA subfamily.

In terms of biological role, hydrolyzes cytidine or uridine to ribose and cytosine or uracil, respectively. This Salmonella arizonae (strain ATCC BAA-731 / CDC346-86 / RSK2980) protein is Pyrimidine-specific ribonucleoside hydrolase RihA.